A 129-amino-acid polypeptide reads, in one-letter code: NADH-quinone oxidoreductase subunit A (129 aa).

Helical transmembrane passes span 9–29, 68–88, and 97–117; these read FPIGVVLLVAVVLAFTMLGLA, LLFIVFDIEAIFLYPWAVLLL, and LGWPGFVSMGIFVFTLVAGLV.

The protein belongs to the complex I subunit 3 family. NDH-1 is composed of 14 different subunits. Subunits NuoA, H, J, K, L, M, N constitute the membrane sector of the complex.

It localises to the cell inner membrane. It catalyses the reaction a quinone + NADH + 5 H(+)(in) = a quinol + NAD(+) + 4 H(+)(out). Functionally, NDH-1 shuttles electrons from NADH, via FMN and iron-sulfur (Fe-S) centers, to quinones in the respiratory chain. The immediate electron acceptor for the enzyme in this species is believed to be ubiquinone. Couples the redox reaction to proton translocation (for every two electrons transferred, four hydrogen ions are translocated across the cytoplasmic membrane), and thus conserves the redox energy in a proton gradient. The chain is NADH-quinone oxidoreductase subunit A from Anaeromyxobacter sp. (strain K).